Reading from the N-terminus, the 523-residue chain is MKPFNELVQHFSDAQGRAALLGMLRGIEREALRIDESGYLALDGHPLELGSALTHSRITTDYSEALLEFITPVNHQVESLLQGLTETHAYSVRHLHGQRLWPVSMPCYVKDEANIPIARYGTSNTGKMKTLYRKGLTYRYGALMQIISGVHFNFSVSQELWQSLYELSDKSLSFDDFISESYFGLIRNYRRLVWVLPYLFGASPALCNSFIKGQKTDLRFEKSGRGTLYLPYATSLRMSDLGYTNKEQADLNISYNSLPEYLAGIRAAIKMPSANFANIGVKVDGEYRQLNANVLQIENEFYSPIRAKRVTKSGEKPSEALARAGVEYIEVRALDVNPFSPIGIEASQVRFLDLFLLYCLLTPSPKSDAAEEARLSANLKSVVLEGRKPGLELHTATGTLSLQTWLLELFDNLSSLAVLLDGETNAYQAALAHWRDAVVDPQKTLSGQVLQQLVTKGQDHGQWVMSLAQQYHQYFIDYPLSSEAASDYDAEAQSSLAKQVELEAAQSAVSLDDYLTDYFGAPA.

Belongs to the glutamate--cysteine ligase type 1 family. Type 1 subfamily.

The catalysed reaction is L-cysteine + L-glutamate + ATP = gamma-L-glutamyl-L-cysteine + ADP + phosphate + H(+). The protein operates within sulfur metabolism; glutathione biosynthesis; glutathione from L-cysteine and L-glutamate: step 1/2. The polypeptide is Glutamate--cysteine ligase (Shewanella oneidensis (strain ATCC 700550 / JCM 31522 / CIP 106686 / LMG 19005 / NCIMB 14063 / MR-1)).